Here is a 257-residue protein sequence, read N- to C-terminus: Protein patched homolog 1 (257 aa).

Topologically, residues 1–199 are extracellular; sequence AKLQTGTAYL…LDDILKSFSD (199 aa). 3 N-linked (GlcNAc...) asparagine glycosylation sites follow: Asn-75, Asn-114, and Asn-177. The chain crosses the membrane as a helical span at residues 200 to 220; that stretch reads ISVIRVASGYLLMLAYACLTM. The SSD domain maps to 201 to 257; sequence SVIRVASGYLLMLAYACLTMLRWDCAKSQGAVGLAGVLLVALSVAAGLGLCSLIGIS. At 221–235 the chain is on the cytoplasmic side; the sequence is LRWDCAKSQGAVGLA. A helical transmembrane segment spans residues 236-256; it reads GVLLVALSVAAGLGLCSLIGI.

This sequence belongs to the patched family. In terms of processing, glycosylation is necessary for SHH binding. In the eye, detected in neural retina, iris, retinal pigment epithelium, but not in lens.

It localises to the membrane. In terms of biological role, acts as a receptor for sonic hedgehog (SHH), indian hedgehog (IHH) and desert hedgehog (DHH). Associates with the smoothened protein (SMO) to transduce the hedgehog's proteins signal. The polypeptide is Protein patched homolog 1 (PTC1) (Cynops pyrrhogaster (Japanese fire-bellied newt)).